A 165-amino-acid chain; its full sequence is Lipoprotein signal peptidase (165 aa).

The next 2 helical transmembrane spans lie at Trp66–Thr86 and Asn91–Val111. Residues Asp121 and Asp139 contribute to the active site. The chain crosses the membrane as a helical span at residues Trp132–Ala152.

The protein belongs to the peptidase A8 family.

It is found in the cell inner membrane. The enzyme catalyses Release of signal peptides from bacterial membrane prolipoproteins. Hydrolyzes -Xaa-Yaa-Zaa-|-(S,diacylglyceryl)Cys-, in which Xaa is hydrophobic (preferably Leu), and Yaa (Ala or Ser) and Zaa (Gly or Ala) have small, neutral side chains.. It functions in the pathway protein modification; lipoprotein biosynthesis (signal peptide cleavage). Functionally, this protein specifically catalyzes the removal of signal peptides from prolipoproteins. The protein is Lipoprotein signal peptidase of Nitratidesulfovibrio vulgaris (strain DP4) (Desulfovibrio vulgaris).